Consider the following 556-residue polypeptide: Formate--tetrahydrofolate ligase (556 aa).

65–72 (TPAGEGKS) provides a ligand contact to ATP.

The protein belongs to the formate--tetrahydrofolate ligase family.

It catalyses the reaction (6S)-5,6,7,8-tetrahydrofolate + formate + ATP = (6R)-10-formyltetrahydrofolate + ADP + phosphate. It functions in the pathway one-carbon metabolism; tetrahydrofolate interconversion. This chain is Formate--tetrahydrofolate ligase, found in Streptococcus agalactiae serotype V (strain ATCC BAA-611 / 2603 V/R).